Reading from the N-terminus, the 252-residue chain is Probable transcriptional regulatory protein A1C_04175 (252 aa).

It belongs to the TACO1 family.

It localises to the cytoplasm. The sequence is that of Probable transcriptional regulatory protein A1C_04175 from Rickettsia akari (strain Hartford).